The primary structure comprises 667 residues: DNA ligase (667 aa).

NAD(+)-binding positions include 34-38 (DYEFD), 83-84 (SL), and Glu117. The N6-AMP-lysine intermediate role is filled by Lys119. NAD(+) is bound by residues Arg140, Glu176, Lys289, and Lys313. Zn(2+) contacts are provided by Cys407, Cys410, Cys425, and Cys431. Positions 591-667 (QVNRNFEGMS…ISEDEFMGMM (77 aa)) constitute a BRCT domain.

The protein belongs to the NAD-dependent DNA ligase family. LigA subfamily. Mg(2+) is required as a cofactor. It depends on Mn(2+) as a cofactor.

The catalysed reaction is NAD(+) + (deoxyribonucleotide)n-3'-hydroxyl + 5'-phospho-(deoxyribonucleotide)m = (deoxyribonucleotide)n+m + AMP + beta-nicotinamide D-nucleotide.. Functionally, DNA ligase that catalyzes the formation of phosphodiester linkages between 5'-phosphoryl and 3'-hydroxyl groups in double-stranded DNA using NAD as a coenzyme and as the energy source for the reaction. It is essential for DNA replication and repair of damaged DNA. The chain is DNA ligase from Chlorobium chlorochromatii (strain CaD3).